The chain runs to 68 residues: MAEMKIADIRAMSPDQMDDAIVNLKKERFNLRFQRATGQLENTARLREARRDIARIKTIAAQQRAKTK.

The protein belongs to the universal ribosomal protein uL29 family.

In Bradyrhizobium sp. (strain BTAi1 / ATCC BAA-1182), this protein is Large ribosomal subunit protein uL29.